We begin with the raw amino-acid sequence, 170 residues long: Two-component response regulator ORR6 (170 aa).

The 120-residue stretch at 51-170 (HVLAVDDSSV…DVSRLCSRIR (120 aa)) folds into the Response regulatory domain. Aspartate 103 carries the 4-aspartylphosphate modification.

This sequence belongs to the ARR family. Type-A subfamily. In terms of processing, two-component system major event consists of a His-to-Asp phosphorelay between a sensor histidine kinase (HK) and a response regulator (RR). In plants, the His-to-Asp phosphorelay involves an additional intermediate named Histidine-containing phosphotransfer protein (HPt). This multistep phosphorelay consists of a His-Asp-His-Asp sequential transfer of a phosphate group between first a His and an Asp of the HK protein, followed by the transfer to a conserved His of the HPt protein and finally the transfer to an Asp in the receiver domain of the RR protein. Expressed in roots, leaf blades, leaf sheaths, shoot apex, flowers and panicles.

Functionally, functions as a response regulator involved in His-to-Asp phosphorelay signal transduction system. Phosphorylation of the Asp residue in the receiver domain activates the ability of the protein to promote the transcription of target genes. Type-A response regulators seem to act as negative regulators of the cytokinin signaling. In Oryza sativa subsp. japonica (Rice), this protein is Two-component response regulator ORR6.